Reading from the N-terminus, the 499-residue chain is D-alanine--D-alanyl carrier protein ligase (499 aa).

152–153 is a binding site for ATP; that stretch reads TS. Residue aspartate 197 coordinates D-alanine. ATP-binding positions include 292–297, aspartate 372, 384–387, and lysine 485; these read NTYGPT and YQGR. Lysine 485 lines the D-alanine pocket.

It belongs to the ATP-dependent AMP-binding enzyme family. DltA subfamily.

The protein localises to the cytoplasm. The enzyme catalyses holo-[D-alanyl-carrier protein] + D-alanine + ATP = D-alanyl-[D-alanyl-carrier protein] + AMP + diphosphate. Its pathway is cell wall biogenesis; lipoteichoic acid biosynthesis. Functionally, catalyzes the first step in the D-alanylation of lipoteichoic acid (LTA), the activation of D-alanine and its transfer onto the D-alanyl carrier protein (Dcp) DltC. In an ATP-dependent two-step reaction, forms a high energy D-alanyl-AMP intermediate, followed by transfer of the D-alanyl residue as a thiol ester to the phosphopantheinyl prosthetic group of the Dcp. D-alanylation of LTA plays an important role in modulating the properties of the cell wall in Gram-positive bacteria, influencing the net charge of the cell wall. The chain is D-alanine--D-alanyl carrier protein ligase from Lactococcus lactis subsp. lactis (strain IL1403) (Streptococcus lactis).